Consider the following 399-residue polypeptide: Fe-coproporphyrin III synthase (399 aa).

The Radical SAM core domain maps to 36 to 253; it reads KDKKPVVVWN…TRKLHEKGFP (218 aa). [4Fe-4S] cluster is bound by residues Cys-50, Cys-54, and Cys-57.

It belongs to the radical SAM superfamily. Requires [4Fe-4S] cluster as cofactor.

The catalysed reaction is 12,18-didecarboxysiroheme + 2 AH2 + 2 S-adenosyl-L-methionine = Fe-coproporphyrin III + 2 5'-deoxyadenosine + 2 L-methionine + 2 acetate + 2 A + 2 H(+). Its pathway is porphyrin-containing compound metabolism; protoheme biosynthesis. Functionally, involved in siroheme-dependent heme b biosynthesis. Catalyzes the conversion of didecarboxysiroheme into Fe-coproporphyrin III by oxidative loss of two acetic acid side chains. The sequence is that of Fe-coproporphyrin III synthase from Methanosarcina barkeri (strain Fusaro / DSM 804).